The primary structure comprises 540 residues: Chaperonin GroEL (540 aa).

Residues 29–32 (TLGP), 86–90 (DGTTT), G413, and D493 each bind ATP. Positions 520–540 (AEKPEPKPAPGPADPGAGMDF) are disordered.

This sequence belongs to the chaperonin (HSP60) family. In terms of assembly, forms a cylinder of 14 subunits composed of two heptameric rings stacked back-to-back. Interacts with the co-chaperonin GroES.

The protein localises to the cytoplasm. The enzyme catalyses ATP + H2O + a folded polypeptide = ADP + phosphate + an unfolded polypeptide.. Its function is as follows. Together with its co-chaperonin GroES, plays an essential role in assisting protein folding. The GroEL-GroES system forms a nano-cage that allows encapsulation of the non-native substrate proteins and provides a physical environment optimized to promote and accelerate protein folding. The sequence is that of Chaperonin GroEL from Tropheryma whipplei (Whipple's bacillus).